The following is a 283-amino-acid chain: Thymidylate synthase (283 aa).

Arg22 contacts dUMP. Cys160 acts as the Nucleophile in catalysis. DUMP contacts are provided by residues 180-183 (RSCD), Asn191, and 221-223 (HIY). Asp183 serves as a coordination point for (6R)-5,10-methylene-5,6,7,8-tetrahydrofolate. Ser282 is a (6R)-5,10-methylene-5,6,7,8-tetrahydrofolate binding site.

The protein belongs to the thymidylate synthase family. Bacterial-type ThyA subfamily. Homodimer.

It localises to the cytoplasm. The catalysed reaction is dUMP + (6R)-5,10-methylene-5,6,7,8-tetrahydrofolate = 7,8-dihydrofolate + dTMP. It participates in pyrimidine metabolism; dTTP biosynthesis. Its function is as follows. Catalyzes the reductive methylation of 2'-deoxyuridine-5'-monophosphate (dUMP) to 2'-deoxythymidine-5'-monophosphate (dTMP) while utilizing 5,10-methylenetetrahydrofolate (mTHF) as the methyl donor and reductant in the reaction, yielding dihydrofolate (DHF) as a by-product. This enzymatic reaction provides an intracellular de novo source of dTMP, an essential precursor for DNA biosynthesis. The chain is Thymidylate synthase from Haemophilus influenzae (strain ATCC 51907 / DSM 11121 / KW20 / Rd).